We begin with the raw amino-acid sequence, 412 residues long: Serine hydroxymethyltransferase (412 aa).

(6S)-5,6,7,8-tetrahydrofolate-binding positions include L121 and 125–127 (GHL). K230 carries the N6-(pyridoxal phosphate)lysine modification. 353-355 (TPF) provides a ligand contact to (6S)-5,6,7,8-tetrahydrofolate.

Belongs to the SHMT family. As to quaternary structure, homodimer. It depends on pyridoxal 5'-phosphate as a cofactor.

It localises to the cytoplasm. It carries out the reaction (6R)-5,10-methylene-5,6,7,8-tetrahydrofolate + glycine + H2O = (6S)-5,6,7,8-tetrahydrofolate + L-serine. It participates in one-carbon metabolism; tetrahydrofolate interconversion. The protein operates within amino-acid biosynthesis; glycine biosynthesis; glycine from L-serine: step 1/1. Its function is as follows. Catalyzes the reversible interconversion of serine and glycine with tetrahydrofolate (THF) serving as the one-carbon carrier. This reaction serves as the major source of one-carbon groups required for the biosynthesis of purines, thymidylate, methionine, and other important biomolecules. Also exhibits THF-independent aldolase activity toward beta-hydroxyamino acids, producing glycine and aldehydes, via a retro-aldol mechanism. The sequence is that of Serine hydroxymethyltransferase from Finegoldia magna (strain ATCC 29328 / DSM 20472 / WAL 2508) (Peptostreptococcus magnus).